Reading from the N-terminus, the 654-residue chain is Bifunctional 3'-phosphoadenosine 5'-phosphosulfate synthase pps-1 (654 aa).

The segment at Met1–Ser26 is disordered. Residues Met1 to Leu231 form an adenylyl-sulfate kinase region. Gly66–Thr71 lines the ATP pocket. Adenosine 5'-phosphosulfate-binding positions include Asp93–Arg96, Phe105, Arg110–Asn113, Ile136–Ser137, Lys175, and Gly190–Phe191. ATP-binding positions include Cys218, Gln449–Asn452, Gly550–Ala554, and Ala592. A sulfate adenylyltransferase region spans residues Val242–Ser653.

The protein in the N-terminal section; belongs to the APS kinase family. In the C-terminal section; belongs to the sulfate adenylyltransferase family.

Its subcellular location is the nucleus. It carries out the reaction sulfate + ATP + H(+) = adenosine 5'-phosphosulfate + diphosphate. The enzyme catalyses adenosine 5'-phosphosulfate + ATP = 3'-phosphoadenylyl sulfate + ADP + H(+). It functions in the pathway sulfur metabolism; sulfate assimilation. Bifunctional enzyme with both ATP sulfurylase and APS kinase activity, which mediates two steps in the sulfate activation pathway. The first step is the transfer of a sulfate group to ATP to yield adenosine 5'-phosphosulfate (APS), and the second step is the transfer of a phosphate group from ATP to APS yielding 3'-phosphoadenylylsulfate (PAPS: activated sulfate donor used by sulfotransferase). Required for normal growth and development. Involved in several aspects of both embryonic and postembryonic development, including molting, changes in cell shape, and patterning of epithelial and muscle cells. This Caenorhabditis elegans protein is Bifunctional 3'-phosphoadenosine 5'-phosphosulfate synthase pps-1.